The chain runs to 393 residues: Riboflavin biosynthesis protein RibBA (393 aa).

Positions 1 to 200 are DHBP synthase; the sequence is MQLDSIDTAL…IEDLEKYRKS (200 aa). Residues 27–28, aspartate 32, 139–143, and glutamate 163 contribute to the D-ribulose 5-phosphate site; these read RE and RRGHT. Position 28 (glutamate 28) interacts with Mg(2+). A Mg(2+)-binding site is contributed by histidine 142. Residues 201 to 393 are GTP cyclohydrolase II; that stretch reads SISKLDAKAK…TKKEKMGHLI (193 aa). 249–253 serves as a coordination point for GTP; it reads RIHSA. Positions 254, 265, and 267 each coordinate Zn(2+). GTP-binding positions include glutamine 270, 291 to 293, and threonine 313; that span reads EGR. Catalysis depends on aspartate 325, which acts as the Proton acceptor; for GTP cyclohydrolase activity. Residue arginine 327 is the Nucleophile; for GTP cyclohydrolase activity of the active site. Residues serine 348 and lysine 353 each contribute to the GTP site.

In the N-terminal section; belongs to the DHBP synthase family. This sequence in the C-terminal section; belongs to the GTP cyclohydrolase II family. Mg(2+) is required as a cofactor. It depends on Mn(2+) as a cofactor. The cofactor is Zn(2+).

The catalysed reaction is D-ribulose 5-phosphate = (2S)-2-hydroxy-3-oxobutyl phosphate + formate + H(+). It catalyses the reaction GTP + 4 H2O = 2,5-diamino-6-hydroxy-4-(5-phosphoribosylamino)-pyrimidine + formate + 2 phosphate + 3 H(+). It participates in cofactor biosynthesis; riboflavin biosynthesis; 2-hydroxy-3-oxobutyl phosphate from D-ribulose 5-phosphate: step 1/1. It functions in the pathway cofactor biosynthesis; riboflavin biosynthesis; 5-amino-6-(D-ribitylamino)uracil from GTP: step 1/4. Catalyzes the conversion of D-ribulose 5-phosphate to formate and 3,4-dihydroxy-2-butanone 4-phosphate. Functionally, catalyzes the conversion of GTP to 2,5-diamino-6-ribosylamino-4(3H)-pyrimidinone 5'-phosphate (DARP), formate and pyrophosphate. The chain is Riboflavin biosynthesis protein RibBA from Staphylococcus saprophyticus subsp. saprophyticus (strain ATCC 15305 / DSM 20229 / NCIMB 8711 / NCTC 7292 / S-41).